We begin with the raw amino-acid sequence, 228 residues long: UPF0758 protein SAB1521c (228 aa).

Positions 102-224 (KITQPSDVAD…FTSLVEAGYF (123 aa)) constitute an MPN domain. Zn(2+) contacts are provided by histidine 173, histidine 175, and aspartate 186. Residues 173-186 (HNHPSGDVTPSQED) carry the JAMM motif motif.

This sequence belongs to the UPF0758 family.

In Staphylococcus aureus (strain bovine RF122 / ET3-1), this protein is UPF0758 protein SAB1521c.